A 370-amino-acid polypeptide reads, in one-letter code: Aminomethyltransferase (370 aa).

It belongs to the GcvT family. As to quaternary structure, the glycine cleavage system is composed of four proteins: P, T, L and H.

The catalysed reaction is N(6)-[(R)-S(8)-aminomethyldihydrolipoyl]-L-lysyl-[protein] + (6S)-5,6,7,8-tetrahydrofolate = N(6)-[(R)-dihydrolipoyl]-L-lysyl-[protein] + (6R)-5,10-methylene-5,6,7,8-tetrahydrofolate + NH4(+). The glycine cleavage system catalyzes the degradation of glycine. The sequence is that of Aminomethyltransferase from Prochlorococcus marinus (strain MIT 9301).